A 317-amino-acid chain; its full sequence is ADIPOR-like receptor IZH2 (317 aa).

Residues 1–78 (MSTLLERTKS…TFKSLFYLHN (78 aa)) are Cytoplasmic-facing. Residues 79–99 (ESVNIYSHLIPALGFFTVLLL) form a helical membrane-spanning segment. Topologically, residues 100 to 110 (DKSTIKVFATT) are extracellular. The helical transmembrane segment at 111–131 (TWLDHMVIDLFYSGAFACLIL) threads the bilayer. The Cytoplasmic portion of the chain corresponds to 132–153 (SSSFHCLKSHSLRIATLGNKLD). The chain crosses the membrane as a helical span at residues 154-174 (YLGICILIVTSMVSILYYGYF). Residues 175–176 (EK) are Extracellular-facing. Residues 177 to 197 (FSLFCLFALITVSFGIACSIV) traverse the membrane as a helical segment. Over 198–212 (SLKDKFRKREWRPYR) the chain is Cytoplasmic. A helical membrane pass occupies residues 213 to 233 (AGLFVCFGLSSIIPIFSGLYC). The Extracellular portion of the chain corresponds to 234–242 (YSFSEIWTQ). A helical membrane pass occupies residues 243 to 263 (IQLFWVLLGGVLYIIGAVLYG). Residues 264-276 (MRFPEKICPGKFD) are Cytoplasmic-facing. The helical transmembrane segment at 277-297 (IWGHSHQLFHFLVVIAALCHL) threads the bilayer. Over 298-317 (RGLLNSYELVHIKMENGIVS) the chain is Extracellular.

This sequence belongs to the ADIPOR family.

Its subcellular location is the membrane. Its function is as follows. Probable receptor, which is involved in metabolic pathways that regulate lipid metabolism such as fatty acid oxidation. The protein is ADIPOR-like receptor IZH2 (IZH2) of Saccharomyces cerevisiae (strain ATCC 204508 / S288c) (Baker's yeast).